A 217-amino-acid polypeptide reads, in one-letter code: Ras-related protein RIC2 (217 aa).

GTP contacts are provided by residues 21 to 28, 69 to 73, and 127 to 130; these read GDSGVGKS, DTAGQ, and NKSD. 2 S-geranylgeranyl cysteine lipidation sites follow: C214 and C215.

This sequence belongs to the small GTPase superfamily. Rab family.

It is found in the cell membrane. Functionally, possesses GTPase activity. The polypeptide is Ras-related protein RIC2 (RIC2) (Oryza sativa subsp. japonica (Rice)).